A 351-amino-acid chain; its full sequence is Dihydroorotate dehydrogenase (quinone) (351 aa).

FMN is bound by residues 67-71 (AGFDK) and Thr91. Lys71 serves as a coordination point for substrate. A substrate-binding site is contributed by 116–120 (NAMGF). FMN is bound by residues Asn145 and Asn178. Asn178 is a substrate binding site. Ser181 acts as the Nucleophile in catalysis. Substrate is bound at residue Asn183. FMN is bound by residues Lys214 and Thr242. 243 to 244 (NT) is a binding site for substrate. FMN is bound by residues Gly262, Gly291, and 312-313 (YS).

The protein belongs to the dihydroorotate dehydrogenase family. Type 2 subfamily. Monomer. It depends on FMN as a cofactor.

It is found in the cell membrane. It carries out the reaction (S)-dihydroorotate + a quinone = orotate + a quinol. It participates in pyrimidine metabolism; UMP biosynthesis via de novo pathway; orotate from (S)-dihydroorotate (quinone route): step 1/1. In terms of biological role, catalyzes the conversion of dihydroorotate to orotate with quinone as electron acceptor. The polypeptide is Dihydroorotate dehydrogenase (quinone) (Helicobacter acinonychis (strain Sheeba)).